The following is a 170-amino-acid chain: Cyclic pyranopterin monophosphate synthase 1 (170 aa).

Substrate is bound by residues 79-81 (LCH) and 116-117 (ME). Asp-131 is an active-site residue.

The protein belongs to the MoaC family. In terms of assembly, homohexamer; trimer of dimers.

The catalysed reaction is (8S)-3',8-cyclo-7,8-dihydroguanosine 5'-triphosphate = cyclic pyranopterin phosphate + diphosphate. It functions in the pathway cofactor biosynthesis; molybdopterin biosynthesis. Catalyzes the conversion of (8S)-3',8-cyclo-7,8-dihydroguanosine 5'-triphosphate to cyclic pyranopterin monophosphate (cPMP). This Mycobacterium bovis (strain ATCC BAA-935 / AF2122/97) protein is Cyclic pyranopterin monophosphate synthase 1 (moaC1).